Consider the following 240-residue polypeptide: Pyridoxine 5'-phosphate synthase (240 aa).

N6 is a binding site for 3-amino-2-oxopropyl phosphate. 8-9 (DH) contributes to the 1-deoxy-D-xylulose 5-phosphate binding site. 3-amino-2-oxopropyl phosphate is bound at residue R17. H42 acts as the Proton acceptor in catalysis. Positions 44 and 49 each coordinate 1-deoxy-D-xylulose 5-phosphate. E69 (proton acceptor) is an active-site residue. T99 serves as a coordination point for 1-deoxy-D-xylulose 5-phosphate. Catalysis depends on H190, which acts as the Proton donor. 3-amino-2-oxopropyl phosphate-binding positions include G191 and 212 to 213 (GH).

This sequence belongs to the PNP synthase family. Homooctamer; tetramer of dimers.

The protein localises to the cytoplasm. The catalysed reaction is 3-amino-2-oxopropyl phosphate + 1-deoxy-D-xylulose 5-phosphate = pyridoxine 5'-phosphate + phosphate + 2 H2O + H(+). It functions in the pathway cofactor biosynthesis; pyridoxine 5'-phosphate biosynthesis; pyridoxine 5'-phosphate from D-erythrose 4-phosphate: step 5/5. Its function is as follows. Catalyzes the complicated ring closure reaction between the two acyclic compounds 1-deoxy-D-xylulose-5-phosphate (DXP) and 3-amino-2-oxopropyl phosphate (1-amino-acetone-3-phosphate or AAP) to form pyridoxine 5'-phosphate (PNP) and inorganic phosphate. The sequence is that of Pyridoxine 5'-phosphate synthase from Pseudomonas putida (strain ATCC 700007 / DSM 6899 / JCM 31910 / BCRC 17059 / LMG 24140 / F1).